Reading from the N-terminus, the 1522-residue chain is MAEFLPPPECPVFEPSWEEFADPFAFIHKIRPIAEQTGICKVRPPPDWQPPFACDVDKLHFTPRIQRLNELEAQTRVKLNFLDQIAKFWELQGCTLKIPHVERKILDLFQLNRLVAEEGGFDVVCKERKWTKIATRMGFAPGKAVGSHIRAHYERILYPYNLFQSGASLLCLQKPDLTSDTKDKEYKPHDIPQRQSVQPSESCPPARRAKRLRAEATNIKTESDSPEVRTHNLRRRMGCAPPKCENEKETYSAVKLAEKREHAGEQERDKAKARSKKPTSAVDLYVCLLCGSGNDEDRLLLCDGCDDSYHTFCLIPPLHDVPKGDWRCPQCLAQECNKPQEAFGFEQAARDYTLRTFGEMADAFKSDYFNMPVHMVPTELVEKEFWRLVSTIEEDVTVEYGADIASKEFGSGFPVRDGKFKVRPEEEEYLDSGWNLNNMPVMEQSVLAHITADICGMKLPWLYVGMCFSSFCWHIEDHWSYSINYLHWGEPKTWYGAPGYAAEQLEDVMKKLAPELFESQPDLLHQLVTIMNPNTLMAHGVPVYRTNQCAGEFVITFPRAYHSGFNQGFNFAEAVNFCTVDWLPLGRQCIEHYRLLSRYCVFSHDEMICKMASKADILDVVVASTVQKDMAIMIDDEKMLREKVQKLGVTDSERVAFELFPDDERQCYKCKTTCFMSAVYCPCKPGLLVCLYHVEDLCSCPTYQYKLGYRYTLEELYPMMNALKMRAESYNEWASNVNEALEAKISNKRSLISFKALIEESELKKFPDNDLLRHLRLVTQDADKCASVAQQLLNGKRQTRYRSGGGKCPNQLTVNELRLFVRQLYALPCVLSQTPLLKDLLDRVEAFQQQSQKLLSEEMPSAAELQELLDVSFDFDVDLPQLAELRVRLEQARWLEDVQMASAEQNSLTLDDMRRLIDSGVGLAPYPAVEKAMAKLQELLTVSEHWDDKARNLIKARPRQSLSSLVVAVKEIEEIPAYLPSGAALKDAVQKAQDWLQEVEALQVGGRVPVLDTLVELVTRGRSIPVHLDYLPRLESLVAEVQAWKECAANTFLCENSPYSLLEVLCPRCDIGTLGLKRKQKKLKEPMPSGKKRSTKLESLSDLERALSESKDTASAMATLGEARLKEMEALRSLRAANEGKVLCSEEDAELKVCVCQKEPAAPMIQCELCRGFFHTGCVSVPHALQGPRVWLCPQCRRSEKPPLEKILPLLASLQRIRVRLPEGDALRYMIERTVNWQHRAQQMLYSGNLKLLQDKVGSGLLYNRWQSTAGPLPETNKVSQTIGAMSFSMPHDWDNRTIYLHSPFSTGQQCIPLHVVSTELDELMMEAQLLQVSLPEIQELYQILFTKQSPSLQAEQKPSVGPSNEKSECCRGKKDGMSYMERKLKRRFERESFCDEKRARVRKMRTPKKKKLKLSHTKDVSSSSRMERERERLLEAQRSSESHLVPSDTSFSEQEDSEDEDAICPAVTCLQPEGEEVDWVQCDGSCNQWFHQVCVGISPEMAEKEDYICASCAGKGSPYRK.

One can recognise a JmjN domain in the interval 10 to 51 (CPVFEPSWEEFADPFAFIHKIRPIAEQTGICKVRPPPDWQPP). Positions 75-165 (TRVKLNFLDQ…ILYPYNLFQS (91 aa)) constitute an ARID domain. Positions 180-192 (DTKDKEYKPHDIP) are enriched in basic and acidic residues. The segment at 180 to 229 (DTKDKEYKPHDIPQRQSVQPSESCPPARRAKRLRAEATNIKTESDSPEVR) is disordered. A PHD-type 1 zinc finger spans residues 284–334 (LYVCLLCGSGNDEDRLLLCDGCDDSYHTFCLIPPLHDVPKGDWRCPQCLAQ). Tyrosine 400 is a 2-oxoglutarate binding site. Residues 428 to 594 (EYLDSGWNLN…LGRQCIEHYR (167 aa)) form the JmjC domain. Fe cation contacts are provided by histidine 474 and glutamate 476. Residues serine 482, asparagine 484, and lysine 492 each contribute to the 2-oxoglutarate site. Histidine 562 serves as a coordination point for Fe cation. The C5HC2 zinc-finger motif lies at 667-719 (CYKCKTTCFMSAVYCPCKPGLLVCLYHVEDLCSCPTYQYKLGYRYTLEELYPM). Residues 1151-1199 (LKVCVCQKEPAAPMIQCELCRGFFHTGCVSVPHALQGPRVWLCPQCRRS) form a PHD-type 2 zinc finger. A compositionally biased stretch (polar residues) spans 1353 to 1365 (LQAEQKPSVGPSN). Disordered stretches follow at residues 1353–1373 (LQAE…CCRG) and 1400–1460 (ARVR…DSED). Basic residues predominate over residues 1400-1416 (ARVRKMRTPKKKKLKLS). Residues 1426 to 1442 (RMERERERLLEAQRSSE) show a composition bias toward basic and acidic residues. The PHD-type 3 zinc-finger motif lies at 1462-1516 (DAICPAVTCLQPEGEEVDWVQCDGSCNQWFHQVCVGISPEMAEKEDYICASCAGK).

Belongs to the JARID1 histone demethylase family. The cofactor is Fe(2+).

It localises to the nucleus. It catalyses the reaction N(6),N(6),N(6)-trimethyl-L-lysyl(4)-[histone H3] + 3 2-oxoglutarate + 3 O2 = L-lysyl(4)-[histone H3] + 3 formaldehyde + 3 succinate + 3 CO2. Its function is as follows. Histone demethylase that demethylates 'Lys-4' of histone H3, thereby playing a central role in histone code. Does not demethylate histone H3 'Lys-9' or H3 'Lys-27'. Demethylates trimethylated, dimethylated and monomethylated H3 'Lys-4'. Acts as a transcriptional corepressor. May repress the CLOCK-BMAL1 heterodimer-mediated transcriptional activation of the core clock component PER2. In Gallus gallus (Chicken), this protein is Lysine-specific demethylase 5B (KDM5B).